The primary structure comprises 486 residues: Betaine aldehyde dehydrogenase (486 aa).

The K(+) site is built by Thr23 and Asp90. Gly147 to Trp149 is an NAD(+) binding site. Lys159 functions as the Charge relay system in the catalytic mechanism. NAD(+)-binding positions include Lys173–Glu176 and Glu226–Thr229. A K(+)-binding site is contributed by Leu241. Glu247 acts as the Proton acceptor in catalysis. NAD(+)-binding residues include Gly249, Cys281, and Glu382. The Nucleophile role is filled by Cys281. Residue Cys281 is modified to Cysteine sulfenic acid (-SOH). The K(+) site is built by Lys452 and Gly455. The Charge relay system role is filled by Glu459.

The protein belongs to the aldehyde dehydrogenase family. In terms of assembly, dimer of dimers. The cofactor is K(+).

The enzyme catalyses betaine aldehyde + NAD(+) + H2O = glycine betaine + NADH + 2 H(+). It functions in the pathway amine and polyamine biosynthesis; betaine biosynthesis via choline pathway; betaine from betaine aldehyde: step 1/1. In terms of biological role, involved in the biosynthesis of the osmoprotectant glycine betaine. Catalyzes the irreversible oxidation of betaine aldehyde to the corresponding acid. This chain is Betaine aldehyde dehydrogenase, found in Vibrio vulnificus (strain YJ016).